A 160-amino-acid polypeptide reads, in one-letter code: Fimbrial protein (160 aa).

Residues 1–7 (MKSLQKG) constitute a propeptide, leader sequence. Position 8 is an N-methylphenylalanine (Phe8). The chain crosses the membrane as a helical span at residues 8–28 (FTLIELMIVVAIIGILAAFAI).

This sequence belongs to the N-Me-Phe pilin family. The pili are polar flexible filaments of about 5.4 nanometers diameter and 2.5 micrometers average length; they consist of only a single polypeptide chain arranged in a helical configuration of five subunits per turn in the assembled pilus.

The protein resides in the fimbrium. It is found in the membrane. This chain is Fimbrial protein (fimA), found in Dichelobacter nodosus (Bacteroides nodosus).